A 272-amino-acid polypeptide reads, in one-letter code: Potassium channel regulatory protein (272 aa).

The BTB domain maps to glutamate 5–arginine 106.

Can form homooligomers. Interacts with KCNA1 (via cytoplasmic N-terminal domain) and KCNA4. Ubiquitous in normal tissues and expressed in some tumor tissues.

It is found in the endoplasmic reticulum. Its function is as follows. Inhibits potassium fluxes in cells. May regulate Kv1 family channel proteins by retaining a fraction of channels in endomembranes. This Homo sapiens (Human) protein is Potassium channel regulatory protein (KCNRG).